The chain runs to 155 residues: 2-C-methyl-D-erythritol 2,4-cyclodiphosphate synthase (155 aa).

Positions 9 and 11 each coordinate a divalent metal cation. Residues 9 to 11 (DSH) and 35 to 36 (HS) each bind 4-CDP-2-C-methyl-D-erythritol 2-phosphate. H43 is an a divalent metal cation binding site. A 4-CDP-2-C-methyl-D-erythritol 2-phosphate-binding site is contributed by 57-59 (DIG).

This sequence belongs to the IspF family. As to quaternary structure, homotrimer. It depends on a divalent metal cation as a cofactor.

It carries out the reaction 4-CDP-2-C-methyl-D-erythritol 2-phosphate = 2-C-methyl-D-erythritol 2,4-cyclic diphosphate + CMP. It functions in the pathway isoprenoid biosynthesis; isopentenyl diphosphate biosynthesis via DXP pathway; isopentenyl diphosphate from 1-deoxy-D-xylulose 5-phosphate: step 4/6. Involved in the biosynthesis of isopentenyl diphosphate (IPP) and dimethylallyl diphosphate (DMAPP), two major building blocks of isoprenoid compounds. Catalyzes the conversion of 4-diphosphocytidyl-2-C-methyl-D-erythritol 2-phosphate (CDP-ME2P) to 2-C-methyl-D-erythritol 2,4-cyclodiphosphate (ME-CPP) with a corresponding release of cytidine 5-monophosphate (CMP). In Koribacter versatilis (strain Ellin345), this protein is 2-C-methyl-D-erythritol 2,4-cyclodiphosphate synthase.